Reading from the N-terminus, the 672-residue chain is ABC transporter G family member 21 (672 aa).

Polar residues predominate over residues 1–35 (MMPPNEQESSFPKTPSANRHETSPVQENRFSSPSH). Positions 1 to 59 (MMPPNEQESSFPKTPSANRHETSPVQENRFSSPSHVNPCLDDDNDHDGPSHQSRQSSVL) are disordered. Residues 50–59 (SHQSRQSSVL) show a composition bias toward low complexity. The 255-residue stretch at 68–322 (LKFEELTYSI…FGSIGYQPGS (255 aa)) folds into the ABC transporter domain. 117–124 (GPSGSGKT) contributes to the ATP binding site. Residues 411 to 617 (MQFSVLLKRG…CYKLLVGVQY (207 aa)) enclose the ABC transmembrane type-2 domain. The next 6 helical transmembrane spans lie at 429–449 (FSGL…LLWW), 460–480 (VGLL…NAIF), 512–532 (LPME…MGGL), 543–563 (LMIV…LGAI), 576–596 (VLML…PGFI), and 649–669 (WDVL…YLAL).

The protein belongs to the ABC transporter superfamily. ABCG family. Eye pigment precursor importer (TC 3.A.1.204) subfamily.

The protein localises to the membrane. This chain is ABC transporter G family member 21 (ABCG21), found in Arabidopsis thaliana (Mouse-ear cress).